Consider the following 1391-residue polypeptide: DNA-directed RNA polymerase subunit beta' (1391 aa).

Zn(2+) contacts are provided by C72, C74, C87, and C90. The Mg(2+) site is built by D462, D464, and D466. Zn(2+) is bound by residues C816, C890, C897, and C900.

It belongs to the RNA polymerase beta' chain family. The RNAP catalytic core consists of 2 alpha, 1 beta, 1 beta' and 1 omega subunit. When a sigma factor is associated with the core the holoenzyme is formed, which can initiate transcription. Requires Mg(2+) as cofactor. It depends on Zn(2+) as a cofactor.

It carries out the reaction RNA(n) + a ribonucleoside 5'-triphosphate = RNA(n+1) + diphosphate. In terms of biological role, DNA-dependent RNA polymerase catalyzes the transcription of DNA into RNA using the four ribonucleoside triphosphates as substrates. The sequence is that of DNA-directed RNA polymerase subunit beta' from Neisseria gonorrhoeae (strain NCCP11945).